The primary structure comprises 160 residues: Lipoprotein signal peptidase (160 aa).

A run of 3 helical transmembrane segments spans residues 13 to 33 (IYITTIIFILILDISSKRLII), 72 to 92 (WFLSTVSMLTILVMTRIITKL), and 104 to 124 (SLIIAGATGNLIDRIFYGFVV). Catalysis depends on residues Asp125 and Asp143. Residues 134-154 (WHFATFNIADCSIFIGIIILM) traverse the membrane as a helical segment.

The protein belongs to the peptidase A8 family.

The protein resides in the cell inner membrane. The enzyme catalyses Release of signal peptides from bacterial membrane prolipoproteins. Hydrolyzes -Xaa-Yaa-Zaa-|-(S,diacylglyceryl)Cys-, in which Xaa is hydrophobic (preferably Leu), and Yaa (Ala or Ser) and Zaa (Gly or Ala) have small, neutral side chains.. Its pathway is protein modification; lipoprotein biosynthesis (signal peptide cleavage). Functionally, this protein specifically catalyzes the removal of signal peptides from prolipoproteins. This chain is Lipoprotein signal peptidase, found in Buchnera aphidicola subsp. Acyrthosiphon pisum (strain 5A).